Here is a 227-residue protein sequence, read N- to C-terminus: 6-phosphogluconolactonase (227 aa).

It belongs to the glucosamine/galactosamine-6-phosphate isomerase family. 6-phosphogluconolactonase subfamily.

It catalyses the reaction 6-phospho-D-glucono-1,5-lactone + H2O = 6-phospho-D-gluconate + H(+). It participates in carbohydrate degradation; pentose phosphate pathway; D-ribulose 5-phosphate from D-glucose 6-phosphate (oxidative stage): step 2/3. Functionally, hydrolysis of 6-phosphogluconolactone to 6-phosphogluconate. The chain is 6-phosphogluconolactonase (pgl) from Helicobacter pylori (strain J99 / ATCC 700824) (Campylobacter pylori J99).